An 82-amino-acid chain; its full sequence is Exodeoxyribonuclease 7 small subunit (82 aa).

It belongs to the XseB family. As to quaternary structure, heterooligomer composed of large and small subunits.

The protein localises to the cytoplasm. It carries out the reaction Exonucleolytic cleavage in either 5'- to 3'- or 3'- to 5'-direction to yield nucleoside 5'-phosphates.. Its function is as follows. Bidirectionally degrades single-stranded DNA into large acid-insoluble oligonucleotides, which are then degraded further into small acid-soluble oligonucleotides. This chain is Exodeoxyribonuclease 7 small subunit, found in Coxiella burnetii (strain CbuG_Q212) (Coxiella burnetii (strain Q212)).